Consider the following 278-residue polypeptide: Sulfur carrier protein FdhD (278 aa).

The active-site Cysteine persulfide intermediate is Cys-121. 260 to 265 (FCKPGR) contributes to the Mo-bis(molybdopterin guanine dinucleotide) binding site.

It belongs to the FdhD family.

The protein resides in the cytoplasm. Its function is as follows. Required for formate dehydrogenase (FDH) activity. Acts as a sulfur carrier protein that transfers sulfur from IscS to the molybdenum cofactor prior to its insertion into FDH. This is Sulfur carrier protein FdhD from Salmonella typhi.